A 395-amino-acid polypeptide reads, in one-letter code: Zinc finger protein 200 (395 aa).

A disordered region spans residues 157–208 (VNGSNPEGEDPEREPVENEDYREKSSDDDEMDSSLVSQQPPDNQEKERLNTS). Residues 169 to 181 (REPVENEDYREKS) are compositionally biased toward basic and acidic residues. The interaction with PRMT3 stretch occupies residues 246–395 (RRTRRWYTCP…HSACKTRKQK (150 aa)). 5 consecutive C2H2-type zinc fingers follow at residues 252–274 (YTCP…QRTH), 280–302 (YDCN…ERIH), 308–330 (YSCS…EGIH), 336–358 (FKCP…LQSH), and 364–386 (YGCK…EKTH).

In terms of assembly, interacts (via C-terminus) with PRMT3 (via zinc-finger); the interaction is direct and required to localize protein arginine N-methyltransferase PRMT3 to the nucleus and inhibit its proteasomal degradation. Highly expressed in testis, weakly expressed in spleen, thymus, prostate, ovary, small intestine colon and peripheral blood leukocytes.

The protein resides in the nucleus. Its function is as follows. Localizes protein arginine N-methyltransferase PRMT3 to the nucleus. This is Zinc finger protein 200 (ZNF200) from Homo sapiens (Human).